Consider the following 429-residue polypeptide: Neuronal pentraxin-2 (429 aa).

Positions M1–A14 are cleaved as a signal peptide. N-linked (GlcNAc...) asparagine glycans are attached at residues N146 and N187. The 202-residue stretch at D221–C422 folds into the Pentraxin (PTX) domain. C251 and C311 are disulfide-bonded. Positions 275, 353, 354, 355, and 365 each coordinate Ca(2+). N391 is a glycosylation site (N-linked (GlcNAc...) asparagine).

In terms of assembly, homooligomer or heterooligomer (probably pentamer) with neuronal pentraxin receptor (NPTXR). The cofactor is Ca(2+).

Its subcellular location is the secreted. In terms of biological role, likely to play role in the modification of cellular properties that underlie long-term plasticity. Binds to agar matrix in a calcium-dependent manner. This chain is Neuronal pentraxin-2 (Nptx2), found in Mus musculus (Mouse).